A 430-amino-acid polypeptide reads, in one-letter code: Tol-Pal system protein TolB (430 aa).

The N-terminal stretch at 1–21 (MKQAFRVALSVLMLFVAVAHA) is a signal peptide.

It belongs to the TolB family. The Tol-Pal system is composed of five core proteins: the inner membrane proteins TolA, TolQ and TolR, the periplasmic protein TolB and the outer membrane protein Pal. They form a network linking the inner and outer membranes and the peptidoglycan layer.

It localises to the periplasm. Part of the Tol-Pal system, which plays a role in outer membrane invagination during cell division and is important for maintaining outer membrane integrity. TolB occupies a key intermediary position in the Tol-Pal system because it communicates directly with both membrane-embedded components, Pal in the outer membrane and TolA in the inner membrane. This Erwinia tasmaniensis (strain DSM 17950 / CFBP 7177 / CIP 109463 / NCPPB 4357 / Et1/99) protein is Tol-Pal system protein TolB.